We begin with the raw amino-acid sequence, 402 residues long: MIPPSSPREDGVDGLPKEAVGAEQPPSPASTSSQESKLQKLKRSLSFKTKSLRSKSADNFFQRTNSEDMKLQAHMVAEISPSSSPLPAPGSLTSTPARAGLHPGGKAHAFQEYIFKKPTFCDVCNHMIVGTNAKHGLRCKACKMSIHHKCTDGLAPQRCMGKLPKGFRRYYSSPLLIHEQFGCIKEVMPIACGNKVDPVYETLRFGTSLAQRTKKGSSGSGSDSPHRTSTSDLVEVPEEANGPGGGYDLRKRSNSVFTYPENGTDDFRDPAKNINHQGSLSKDPLQMNTYVALYKFVPQENEDLEMRPGDIITLLEDSNEDWWKGKIQDRIGFFPANFVQRLQQNEKIFRCVRTFIGCKEQGQITLKENQICVSSEEEQDGFIRVLSGKKKGLIPLDVLENI.

The interval M1–F47 is disordered. The Phorbol-ester/DAG-type zinc-finger motif lies at A107 to C159. The tract at residues Q211 to Y247 is disordered. SH3 domains follow at residues L285–Q344 and K347–I402.

Interacts (via SH3 domains) with CACNA1S. Interacts with CACNA1H. Interacts with CACNA1C.

Its subcellular location is the cytoplasm. It is found in the cytosol. The protein localises to the cell membrane. It localises to the sarcolemma. Its function is as follows. Promotes expression of the ion channel CACNA1H at the cell membrane, and thereby contributes to the regulation of channel activity. Plays a minor and redundant role in promoting the expression of calcium channel CACNA1S at the cell membrane, and thereby contributes to increased channel activity. Slows down the inactivation rate of the calcium channel CACNA1C. The protein is SH3 and cysteine-rich domain-containing protein (STAC) of Homo sapiens (Human).